The following is a 615-amino-acid chain: MKPIIFLVLSLLLILEKQAAVMGQKGGSKGRLPSESSQFPHGQKGQQYCARKDKQHAESKRSVSIEHTYHVDIPDHDQTRTSKQYDLNAQNKRIKSEKHAAGSQEPFNHKQEGREHGKSKGDFHVLIIHHKRGHAPHGTQNPSQDQGNSTSGKGISSQDSNTKERLLALGLGKEQDSVSGTQRNGTQGGSQSSPVLQTEDPVHNKKPETQNSLQNKGSSPNVNETKQKHSSKVQSPLCSAQEDRLQHGSKDVFSKNQNQTRNPNQDQEHGQKAHNRSCQCSSTEERRPNHGEKGIQKDASKGSTSNQTEDKMHDKSQKQVTTPSQEDGHRANKTSSQSSGTEERRPNHGEKGIQKDASKGSTSNQTEDKMHDKSQKQVTTPSQEDGHRANKTSSQSSGTEERRPNHGEKGIQKDASKGSTSNQTEDKMHDKSQKQVTTPSQEDGHRANKTSSQSSGTEERRPNHGEKGIQKDASKGSTSNKTEDKMHDKSQKQVTTPSQEDGHRANKTSSQSSGTEERRPNHGEKGIQKDASKGSSSNKTEDEKHDKSQKQVTTPSQDQQSGQDADEEEDLLSHYQKDRHQHRSYGGLDIVIVEHEADDDDRLTHHDNNQNSIFT.

Positions 1-23 (MKPIIFLVLSLLLILEKQAAVMG) are cleaved as a signal peptide. Q24 carries the post-translational modification Pyrrolidone carboxylic acid. Disordered regions lie at residues 24-118 (QKGG…EHGK), 133-160 (GHAP…SQDS), and 172-585 (GKEQ…HRSY). Polar residues predominate over residues 34–46 (SESSQFPHGQKGQ). The segment covering 50-80 (ARKDKQHAESKRSVSIEHTYHVDIPDHDQTR) has biased composition (basic and acidic residues). Residues 81–91 (TSKQYDLNAQN) are compositionally biased toward polar residues. The span at 107 to 118 (FNHKQEGREHGK) shows a compositional bias: basic and acidic residues. 3 stretches are compositionally biased toward polar residues: residues 138 to 160 (GTQN…SQDS), 177 to 196 (SVSG…SPVL), and 209 to 224 (TQNS…NVNE). N-linked (GlcNAc...) asparagine glycans are attached at residues N148, N184, and N223. Residues 241–253 (QEDRLQHGSKDVF) show a composition bias toward basic and acidic residues. Over residues 254-265 (SKNQNQTRNPNQ) the composition is skewed to polar residues. N-linked (GlcNAc...) asparagine glycans are attached at residues N258 and N275. The segment covering 283–300 (TEERRPNHGEKGIQKDAS) has biased composition (basic and acidic residues). N-linked (GlcNAc...) asparagine glycosylation is present at N306. The span at 308-317 (TEDKMHDKSQ) shows a compositional bias: basic and acidic residues. The N-linked (GlcNAc...) asparagine glycan is linked to N332. Residues 341-358 (TEERRPNHGEKGIQKDAS) are compositionally biased toward basic and acidic residues. Residue N364 is glycosylated (N-linked (GlcNAc...) asparagine). The segment covering 366 to 375 (TEDKMHDKSQ) has biased composition (basic and acidic residues). An N-linked (GlcNAc...) asparagine glycan is attached at N390. The span at 399 to 416 (TEERRPNHGEKGIQKDAS) shows a compositional bias: basic and acidic residues. A glycan (N-linked (GlcNAc...) asparagine) is linked at N422. Residues 424–433 (TEDKMHDKSQ) are compositionally biased toward basic and acidic residues. The N-linked (GlcNAc...) asparagine glycan is linked to N448. Residues 457 to 474 (TEERRPNHGEKGIQKDAS) show a composition bias toward basic and acidic residues. An N-linked (GlcNAc...) asparagine glycan is attached at N480. Residues 481–491 (KTEDKMHDKSQ) are compositionally biased toward basic and acidic residues. Residue N506 is glycosylated (N-linked (GlcNAc...) asparagine). A compositionally biased stretch (basic and acidic residues) spans 515–532 (TEERRPNHGEKGIQKDAS). Residue N538 is glycosylated (N-linked (GlcNAc...) asparagine). The segment covering 539–549 (KTEDEKHDKSQ) has biased composition (basic and acidic residues). The span at 550–563 (KQVTTPSQDQQSGQ) shows a compositional bias: polar residues.

This sequence belongs to the semenogelin family. As to quaternary structure, occurs in disulfide-linked complexes. Post-translationally, transglutaminase substrate. Rapidly cleaved after ejaculation by KLK3/PSA, resulting in liquefaction of the semen coagulum and the progressive release of motile spermatozoa.

The protein localises to the secreted. Its function is as follows. Predominant protein in semen. It participates in the formation of a gel matrix entrapping the accessory gland secretions and ejaculated spermatozoa. Fragments of semenogelin and/or fragments of the related proteins may contribute to the activation of progressive sperm movements as the gel-forming proteins are fragmented by KLK3/PSA. The sequence is that of Semenogelin-1 (SEMG1) from Saguinus oedipus (Cotton-top tamarin).